The primary structure comprises 122 residues: Large ribosomal subunit protein uL14 (122 aa).

It belongs to the universal ribosomal protein uL14 family. Part of the 50S ribosomal subunit. Forms a cluster with proteins L3 and L19. In the 70S ribosome, L14 and L19 interact and together make contacts with the 16S rRNA in bridges B5 and B8.

Binds to 23S rRNA. Forms part of two intersubunit bridges in the 70S ribosome. The chain is Large ribosomal subunit protein uL14 from Clavibacter michiganensis subsp. michiganensis (strain NCPPB 382).